Consider the following 1858-residue polypeptide: Protein dop1 (1858 aa).

The span at 1–23 (MSLDPSSFPRSNSPASSDSSLTR) shows a compositional bias: low complexity. 2 disordered regions span residues 1 to 33 (MSLDPSSFPRSNSPASSDSSLTRSRLRGKEGSL) and 1052 to 1092 (PPPP…LPSP). The span at 1070-1079 (TSPSLLSFTS) shows a compositional bias: polar residues. The transactivation stretch occupies residues 1838 to 1854 (NLEACRDDLLADLFNES).

The protein belongs to the DOP1 family.

The protein resides in the golgi apparatus membrane. Functionally, involved in cellular morphogenesis. Required for traffic between late Golgi and early endosomes, and for the normal structure and organization of the endoplasmic reticulum. During the vegetative phase, contributes to the highly polarized hyphal growth. Required for the reproductive cycle. Involved in conidiophore initiation and differentiation. May have a role in controlling the balance between vegetative proliferation and developmental morphogenesis. The sequence is that of Protein dop1 (dop1) from Emericella nidulans (strain FGSC A4 / ATCC 38163 / CBS 112.46 / NRRL 194 / M139) (Aspergillus nidulans).